Here is a 290-residue protein sequence, read N- to C-terminus: Bifunctional protein FolD (290 aa).

NADP(+) is bound by residues Gly169–Ser171, Ile194, and Ile235.

The protein belongs to the tetrahydrofolate dehydrogenase/cyclohydrolase family. Homodimer.

The enzyme catalyses (6R)-5,10-methylene-5,6,7,8-tetrahydrofolate + NADP(+) = (6R)-5,10-methenyltetrahydrofolate + NADPH. It carries out the reaction (6R)-5,10-methenyltetrahydrofolate + H2O = (6R)-10-formyltetrahydrofolate + H(+). The protein operates within one-carbon metabolism; tetrahydrofolate interconversion. In terms of biological role, catalyzes the oxidation of 5,10-methylenetetrahydrofolate to 5,10-methenyltetrahydrofolate and then the hydrolysis of 5,10-methenyltetrahydrofolate to 10-formyltetrahydrofolate. This Helicobacter pylori (strain J99 / ATCC 700824) (Campylobacter pylori J99) protein is Bifunctional protein FolD.